Here is a 79-residue protein sequence, read N- to C-terminus: Bacteriochlorophyll c-binding protein (79 aa).

A bacteriochlorophyll c is bound at residue H25.

Belongs to the BChl C/E-binding protein family.

The protein localises to the chlorosome. It is found in the chlorosome envelope. Its function is as follows. Component of the photosynthetic apparatus. The light harvesting B740 complex binds bacteriochlorophyll c. This chain is Bacteriochlorophyll c-binding protein (csmA), found in Chlorobaculum tepidum (strain ATCC 49652 / DSM 12025 / NBRC 103806 / TLS) (Chlorobium tepidum).